Consider the following 357-residue polypeptide: Aurora kinase A- and ninein-interacting protein (357 aa).

Polar residues predominate over residues 71 to 91 (LQPGKTNGSDQKSVSSHTESQ). Residues 71-98 (LQPGKTNGSDQKSVSSHTESQINKESKK) are disordered. The interaction with AURKA stretch occupies residues 187–357 (RKEEKGDSAR…EGNQVIRHQF (171 aa)). Ser267 and Ser292 each carry phosphoserine. Positions 281 to 357 (KDSWSQLFTE…EGNQVIRHQF (77 aa)) are interaction with RBBP8/CtIP.

It belongs to the AUNIP family. As to quaternary structure, interacts (via C-terminus) with AURKA (via C-terminus). Interacts (via N-terminus) with NIN; this interaction blocks NIN phosphorylation by both AURKA and GSK3B. Identified in a complex with NIN and AURKA. Interacts with RBBP8/CtIP. In terms of tissue distribution, expressed in heart, skeletal muscles, placenta and testis.

Its subcellular location is the nucleus. It localises to the chromosome. It is found in the cytoplasm. The protein resides in the cytoskeleton. The protein localises to the microtubule organizing center. Its subcellular location is the centrosome. It localises to the spindle pole. Functionally, DNA-binding protein that accumulates at DNA double-strand breaks (DSBs) following DNA damage and promotes DNA resection and homologous recombination. Serves as a sensor of DNA damage: binds DNA with a strong preference for DNA substrates that mimic structures generated at stalled replication forks, and anchors RBBP8/CtIP to DSB sites to promote DNA end resection and ensuing homologous recombination repair. Inhibits non-homologous end joining (NHEJ). Required for the dynamic movement of AURKA at the centrosomes and spindle apparatus during the cell cycle. The protein is Aurora kinase A- and ninein-interacting protein of Homo sapiens (Human).